Here is a 230-residue protein sequence, read N- to C-terminus: Ribonuclease 3 (230 aa).

The region spanning 6–135 (TTELKERYGI…FLGALYLDQK (130 aa)) is the RNase III domain. Residue Glu48 coordinates Mg(2+). Residue Asp52 is part of the active site. Residues Asp121 and Glu124 each coordinate Mg(2+). Residue Glu124 is part of the active site. Residues 161 to 230 (DHKTQLQEVL…AERALKSIPQ (70 aa)) form the DRBM domain.

It belongs to the ribonuclease III family. In terms of assembly, homodimer. It depends on Mg(2+) as a cofactor.

The protein localises to the cytoplasm. It carries out the reaction Endonucleolytic cleavage to 5'-phosphomonoester.. Its function is as follows. Digests double-stranded RNA. Involved in the processing of primary rRNA transcript to yield the immediate precursors to the large and small rRNAs (23S and 16S). Processes some mRNAs, and tRNAs when they are encoded in the rRNA operon. Processes pre-crRNA and tracrRNA of type II CRISPR loci if present in the organism. In Enterococcus faecalis (strain ATCC 700802 / V583), this protein is Ribonuclease 3.